The sequence spans 84 residues: Gomesin-like peptide (84 aa).

The signal sequence occupies residues 1 to 23 (MNRTRALVCLFLAVLILAHESEA). Gln24 carries the pyrrolidone carboxylic acid modification. Cystine bridges form between Cys25/Cys38 and Cys29/Cys34. At Arg41 the chain carries Arginine amide. A propeptide spanning residues 42–84 (GKRSVEEPSGGAQVVEKRAVDDADIPSAVEERELDEEESIEFR) is cleaved from the precursor.

In terms of tissue distribution, expressed by the venom gland.

The protein localises to the secreted. Functionally, antibacterial peptide. The chain is Gomesin-like peptide from Hadronyche infensa (Fraser island funnel-web spider).